A 707-amino-acid polypeptide reads, in one-letter code: Dendrin (707 aa).

Disordered stretches follow at residues Met1–Ser22, Gln67–Trp86, Ala94–Gly195, Ala213–Leu273, and Thr342–Glu377. Positions Ala103–Gly134 form a coiled coil. Positions Val105–Arg127 are enriched in basic and acidic residues. Residues Arg113–Lys131 are nuclear localization. An interaction with MAGI2 region spans residues Gly186 to Pro236. The interaction with ACTN1 stretch occupies residues Pro340–Ala434. The segment covering Pro359–Arg369 has biased composition (basic residues). Ser387 bears the Phosphoserine mark. Disordered stretches follow at residues Lys389 to Glu421 and Arg517 to Glu707. The segment at Gly406–Glu707 is interaction with CD2AP and NPHS1. 2 stretches are compositionally biased toward basic and acidic residues: residues Glu524 to Ser544 and Gly692 to Glu707.

As to quaternary structure, forms a ternary complex with MAGI2 and SH3KBP1; recruits DDN to the cytoplasm. Interacts with MAGI1. Interacts with ACTN1 and may interact with WWC1. Interacts with the podocyte slit diaphragm proteins CD2AP, NPHS1 and NPHS2; the interaction with CD2AP and NPHS1 is direct. As to expression, specifically expressed in forebrain structures, particularly in neocortex, olfactory bulb, hippocampus, caudate-putamen, and limbic system (at protein level). Also detected in spleen, liver, kidney and placenta (at protein level).

The protein localises to the cell projection. The protein resides in the dendritic spine membrane. It localises to the cytoplasm. Its subcellular location is the endoplasmic reticulum membrane. It is found in the perikaryon. The protein localises to the nucleus. Promotes apoptosis of kidney glomerular podocytes. Podocytes are highly specialized cells essential to the ultrafiltration of blood, resulting in the extraction of urine and the retention of protein. In Rattus norvegicus (Rat), this protein is Dendrin (Ddn).